The sequence spans 160 residues: Small ribosomal subunit protein uS10m (160 aa).

Belongs to the universal ribosomal protein uS10 family. In terms of assembly, component of the mitochondrial ribosome small subunit (28S) which comprises a 12S rRNA and about 30 distinct proteins.

The protein localises to the mitochondrion. This chain is Small ribosomal subunit protein uS10m (Mrps10), found in Mus musculus (Mouse).